The primary structure comprises 241 residues: Probable transcriptional regulatory protein azo0574 (241 aa).

Residues 1–21 (MAGHSKWANIQHRKGRQDAKR) are disordered.

Belongs to the TACO1 family.

It localises to the cytoplasm. This Azoarcus sp. (strain BH72) protein is Probable transcriptional regulatory protein azo0574.